We begin with the raw amino-acid sequence, 400 residues long: Nicotinate phosphoribosyltransferase (400 aa).

Histidine 220 carries the phosphohistidine; by autocatalysis modification.

It belongs to the NAPRTase family. Transiently phosphorylated on a His residue during the reaction cycle. Phosphorylation strongly increases the affinity for substrates and increases the rate of nicotinate D-ribonucleotide production. Dephosphorylation regenerates the low-affinity form of the enzyme, leading to product release.

It carries out the reaction nicotinate + 5-phospho-alpha-D-ribose 1-diphosphate + ATP + H2O = nicotinate beta-D-ribonucleotide + ADP + phosphate + diphosphate. Its pathway is cofactor biosynthesis; NAD(+) biosynthesis; nicotinate D-ribonucleotide from nicotinate: step 1/1. In terms of biological role, catalyzes the synthesis of beta-nicotinate D-ribonucleotide from nicotinate and 5-phospho-D-ribose 1-phosphate at the expense of ATP. This chain is Nicotinate phosphoribosyltransferase, found in Escherichia fergusonii (strain ATCC 35469 / DSM 13698 / CCUG 18766 / IAM 14443 / JCM 21226 / LMG 7866 / NBRC 102419 / NCTC 12128 / CDC 0568-73).